Reading from the N-terminus, the 170-residue chain is MNTLQKGFTLIELMIVIAIVGILAAVALPAYQDYTARAQVSEAILLAEGQKSAVTEYYLNHGEWPSNNTSAGVASSTDIKGKYVQSVEVKNGVVTATMASSNVNNEIKGKKLSLWAKRQDGSVKWFCGQPVKRNDTATTNDDVKADTAANGKQIDTKHLPSTCRDAASAG.

Residues 1–7 (MNTLQKG) constitute a propeptide that is removed on maturation. An N-methylphenylalanine modification is found at Phe-8. Residues 8–28 (FTLIELMIVIAIVGILAAVAL) traverse the membrane as a helical segment. The O-linked (Gal...) serine glycan is linked to Ser-70. Position 100 is an O-(sn-1-glycerophosphoryl)serine (Ser-100). The cysteines at positions 127 and 163 are disulfide-linked.

The protein belongs to the N-Me-Phe pilin family. The pili are polar flexible filaments of about 5.4 nanometers diameter and 2.5 micrometers average length; they consist of only a single polypeptide chain arranged in a helical configuration of five subunits per turn in the assembled pilus. Post-translationally, O-linked glycan consists of GlcNAc-Gal disaccharide.

The protein resides in the fimbrium. It is found in the membrane. Major component of the type IV pilus (T4P) that plays a role in cellular adherence, microcolony formation as well as twitching motility. The protein is Fimbrial protein (pilE) of Neisseria meningitidis serogroup A / serotype 4A (strain DSM 15465 / Z2491).